Reading from the N-terminus, the 215-residue chain is Large ribosomal subunit protein eL15 (215 aa).

A disordered region spans residues 179–215 (GTVKHKWKKKEKEREQKKRHEATKYYRLQNYDKLPGK). Positions 188–202 (KEKEREQKKRHEATK) are enriched in basic and acidic residues.

The protein belongs to the eukaryotic ribosomal protein eL15 family.

This chain is Large ribosomal subunit protein eL15, found in Sulfurisphaera tokodaii (strain DSM 16993 / JCM 10545 / NBRC 100140 / 7) (Sulfolobus tokodaii).